Here is a 230-residue protein sequence, read N- to C-terminus: Flagellar L-ring protein (230 aa).

A signal peptide spans 1–16 (MYLVFGIIFTSVIVTS). A lipid anchor (N-palmitoyl cysteine) is attached at Cys17. Cys17 is lipidated: S-diacylglycerol cysteine.

It belongs to the FlgH family. As to quaternary structure, the basal body constitutes a major portion of the flagellar organelle and consists of four rings (L,P,S, and M) mounted on a central rod.

It is found in the cell outer membrane. The protein resides in the bacterial flagellum basal body. In terms of biological role, assembles around the rod to form the L-ring and probably protects the motor/basal body from shearing forces during rotation. The protein is Flagellar L-ring protein of Bartonella bacilliformis (strain ATCC 35685 / KC583 / Herrer 020/F12,63).